The sequence spans 248 residues: 1,2-phenylacetyl-CoA epoxidase, subunit C (248 aa).

Substrate is bound by residues 76–79 and 177–179; these read QFSN and IAL.

As to quaternary structure, forms a stable heterotetramer (dimer of heterodimers) with PaaA and a stable heterodimer with PaaB.

The protein operates within aromatic compound metabolism; phenylacetate degradation. Functionally, component of 1,2-phenylacetyl-CoA epoxidase multicomponent enzyme system which catalyzes the reduction of phenylacetyl-CoA (PA-CoA) to form 1,2-epoxyphenylacetyl-CoA. The subunit C may be essential for structural integrity of the alpha subunit. This chain is 1,2-phenylacetyl-CoA epoxidase, subunit C (paaC), found in Escherichia coli (strain K12).